The sequence spans 152 residues: MYPAHLLVLLAVCVSLLGASNIPLPSLDFEQFGKMIQCTIPCEESCLAYMDYGCYCGPGGSGTPLDELDRCRQTHDNCYAEAGKLPACKAMLSEPYNDTYSYGCIERQLTCNDDNDECKAFICNCDRAAVICFSGAPYNDSNYDIGTIEHCK.

Positions 1–19 are cleaved as a signal peptide; that stretch reads MYPAHLLVLLAVCVSLLGA. A propeptide spanning residues 20–27 is cleaved from the precursor; it reads SNIPLPSL. 6 disulfides stabilise this stretch: Cys-38/Cys-104, Cys-54/Cys-151, Cys-71/Cys-132, Cys-78/Cys-125, Cys-88/Cys-118, and Cys-111/Cys-123. Ca(2+)-binding residues include Tyr-55, Gly-57, and Gly-59. The active site involves His-75. Asp-76 provides a ligand contact to Ca(2+). The active site involves Asp-126.

Belongs to the phospholipase A2 family. Group I subfamily. D49 sub-subfamily. Ca(2+) is required as a cofactor. Post-translationally, this enzyme lacks one of the seven disulfide bonds found in similar PLA2 proteins. In terms of tissue distribution, expressed by the venom gland.

It localises to the secreted. The enzyme catalyses a 1,2-diacyl-sn-glycero-3-phosphocholine + H2O = a 1-acyl-sn-glycero-3-phosphocholine + a fatty acid + H(+). In terms of biological role, snake venom phospholipase A2 (PLA2) that inhibits collagen-induced platelet aggregation. PLA2 catalyzes the calcium-dependent hydrolysis of the 2-acyl groups in 3-sn-phosphoglycerides. The polypeptide is Acidic phospholipase A2 S16-19 (Austrelaps superbus (Lowland copperhead snake)).